The chain runs to 711 residues: Serine/threonine-protein kinase ATG1b (711 aa).

The Protein kinase domain occupies 20–277 (YAVGRQIGSG…FEEFFHHPFL (258 aa)). ATP is bound by residues 26–34 (IGSGSFSVV) and Lys49. Asp142 serves as the catalytic Proton acceptor. Disordered stretches follow at residues 318-342 (LPFF…TSPM) and 383-419 (FEGH…SMDQ). Positions 383–393 (FEGHRLSDRSQ) are enriched in basic and acidic residues. Residues 394–410 (FKPSSLPDSRSFSTQGR) show a composition bias toward polar residues. Positions 421-424 (YVLI) match the AIM (Atg8-family-interacting motif) motif.

It belongs to the protein kinase superfamily. Ser/Thr protein kinase family.

It localises to the cytoplasmic vesicle. Its subcellular location is the autophagosome. Serine/threonine protein kinase involved in autophagy. The ATG1-ATG13 protein kinase complex regulates downstream events required for autophagosome enclosure and/or vacuolar delivery. In Arabidopsis thaliana (Mouse-ear cress), this protein is Serine/threonine-protein kinase ATG1b.